The primary structure comprises 719 residues: DNA replication licensing factor MCM7 (719 aa).

Ala2 is modified (N-acetylalanine). Residues Lys15 and Lys28 each participate in a glycyl lysine isopeptide (Lys-Gly) (interchain with G-Cter in SUMO2) cross-link. A phosphoserine mark is found at Ser121 and Ser314. Residues 332–538 (FYEKLAASIA…NDLRLAQHIT (207 aa)) enclose the MCM domain. Residue Tyr345 participates in ATP binding. The residue at position 365 (Ser365) is a Phosphoserine. ATP is bound by residues Gly384, Ala386, Lys387, Ser388, and Asn489. Ser500 carries the post-translational modification Phosphoserine. The Arginine finger signature appears at 513 to 516 (SRFD). ATP is bound at residue Arg514. Residues 521-564 (IQDRPDRDNDLRLAQHITYVHQHSRQPPAQFEPLDMKLMRRYIA) form an interaction with RAD17 region. Residues 577-719 (LADYITAAYV…NTARTRITFV (143 aa)) form an interaction with ATRIP region. Arg604 provides a ligand contact to ATP. The residue at position 678 (Ser678) is a Phosphoserine.

This sequence belongs to the MCM family. As to quaternary structure, component of the MCM2-7 complex. The complex forms a toroidal hexameric ring with the proposed subunit order MCM2-MCM6-MCM4-MCM7-MCM3-MCM5. Component of the CMG helicase complex, a hexameric ring of related MCM2-7 subunits stabilized by CDC45 and the tetrameric GINS complex. Interacts with the ATR-ATRIP complex and with RAD17. Interacts with TIPIN. Interacts with MCMBP. Interacts with ANKRD17. Component of the replisome complex composed of at least DONSON, MCM2, MCM7, PCNA and TICRR. Post-translationally, O-glycosylated (O-GlcNAcylated), in a cell cycle-dependent manner. In terms of processing, ubiquitinated by ECS(LRR1) E3 ubiquitin-protein ligase complex when forks converge following formation of DNA interstrand cross-links. During mitosis, ubiquitinated by TRAIP when forks converge following formation of DNA interstrand cross-links. Short ubiquitin chains on MCM7 promote recruitment of DNA glycosylase NEIL3. If the interstrand cross-link cannot be cleaved by NEIL3, the ubiquitin chains continue to grow on MCM7, promoting the unloading of the CMG helicase complex by the VCP/p97 ATPase.

The protein resides in the nucleus. It is found in the chromosome. The catalysed reaction is ATP + H2O = ADP + phosphate + H(+). Acts as a component of the MCM2-7 complex (MCM complex) which is the replicative helicase essential for 'once per cell cycle' DNA replication initiation and elongation in eukaryotic cells. Core component of CDC45-MCM-GINS (CMG) helicase, the molecular machine that unwinds template DNA during replication, and around which the replisome is built. The active ATPase sites in the MCM2-7 ring are formed through the interaction surfaces of two neighboring subunits such that a critical structure of a conserved arginine finger motif is provided in trans relative to the ATP-binding site of the Walker A box of the adjacent subunit. The six ATPase active sites, however, are likely to contribute differentially to the complex helicase activity. Required for S-phase checkpoint activation upon UV-induced damage. This chain is DNA replication licensing factor MCM7 (MCM7), found in Bos taurus (Bovine).